The sequence spans 185 residues: Ribosome-recycling factor (185 aa).

The interval 132 to 152 (RRDANEQLKKMEKDSELTEDD) is disordered.

It belongs to the RRF family.

It is found in the cytoplasm. Its function is as follows. Responsible for the release of ribosomes from messenger RNA at the termination of protein biosynthesis. May increase the efficiency of translation by recycling ribosomes from one round of translation to another. The sequence is that of Ribosome-recycling factor from Alkaliphilus metalliredigens (strain QYMF).